Here is a 332-residue protein sequence, read N- to C-terminus: Glycerol-3-phosphate dehydrogenase [NAD(P)+] (332 aa).

NADPH is bound by residues Ser-11, Trp-12, Arg-32, Arg-33, and Lys-106. Sn-glycerol 3-phosphate contacts are provided by Lys-106 and Gly-136. Ala-140 lines the NADPH pocket. Residues Lys-191, Asp-244, Ser-254, Arg-255, and Asn-256 each coordinate sn-glycerol 3-phosphate. Lys-191 acts as the Proton acceptor in catalysis. Arg-255 contributes to the NADPH binding site. Positions 280 and 282 each coordinate NADPH.

This sequence belongs to the NAD-dependent glycerol-3-phosphate dehydrogenase family.

It is found in the cytoplasm. It carries out the reaction sn-glycerol 3-phosphate + NAD(+) = dihydroxyacetone phosphate + NADH + H(+). The catalysed reaction is sn-glycerol 3-phosphate + NADP(+) = dihydroxyacetone phosphate + NADPH + H(+). Its pathway is membrane lipid metabolism; glycerophospholipid metabolism. Functionally, catalyzes the reduction of the glycolytic intermediate dihydroxyacetone phosphate (DHAP) to sn-glycerol 3-phosphate (G3P), the key precursor for phospholipid synthesis. This chain is Glycerol-3-phosphate dehydrogenase [NAD(P)+], found in Corynebacterium kroppenstedtii (strain DSM 44385 / JCM 11950 / CIP 105744 / CCUG 35717).